The primary structure comprises 117 residues: uncharacterized protein (117 aa).

Residues 1–18 form the signal peptide; sequence MKFFWVSSLLGLLGLSTA. N-linked (GlcNAc...) asparagine glycosylation is present at Asn-86.

This is an uncharacterized protein from Schizosaccharomyces pombe (strain 972 / ATCC 24843) (Fission yeast).